A 432-amino-acid chain; its full sequence is ATP-dependent RNA helicase RhlB (432 aa).

Residues 9–37 carry the Q motif motif; that stretch reads QRFADLPLHAEVIQALNENGFEFCTPIQA. The 180-residue stretch at 40–219 folds into the Helicase ATP-binding domain; the sequence is LPVLLKAKDI…YDHMNDPEKV (180 aa). 53 to 60 provides a ligand contact to ATP; it reads AQTGTGKT. The short motif at 165-168 is the DEAD box element; that stretch reads DEAD. In terms of domain architecture, Helicase C-terminal spans 243-390; that stretch reads KMRLLLTLME…VSRYDREALL (148 aa). The disordered stretch occupies residues 395-432; that stretch reads TPVKIHRKHPTSRTRDGAKGAHRSGGARPPRHRTRRPS. Basic residues predominate over residues 423 to 432; it reads PPRHRTRRPS.

Belongs to the DEAD box helicase family. RhlB subfamily. Component of the RNA degradosome, which is a multiprotein complex involved in RNA processing and mRNA degradation.

Its subcellular location is the cytoplasm. The enzyme catalyses ATP + H2O = ADP + phosphate + H(+). Its function is as follows. DEAD-box RNA helicase involved in RNA degradation. Has RNA-dependent ATPase activity and unwinds double-stranded RNA. The polypeptide is ATP-dependent RNA helicase RhlB (Shewanella denitrificans (strain OS217 / ATCC BAA-1090 / DSM 15013)).